A 244-amino-acid polypeptide reads, in one-letter code: Meiotic drive suppressor wtf2 (244 aa).

Polar residues predominate over residues 1–10; sequence MKNNYTSLKS. The interval 1–68 is disordered; sequence MKNNYTSLKS…RENNPSRSTD (68 aa). Residues 17–30 are compositionally biased toward basic and acidic residues; sequence ELKTDHEIDLEKGP. 4 helical membrane passes run 73-93, 110-130, 149-169, and 183-203; these read FLIK…LAIC, WTLF…LTYF, WENM…VGSP, and LKWS…VFIA.

It belongs to the WTF family. Homomer. Interacts with other proteins that exhibit high sequence similarity.

It localises to the spore membrane. Its subcellular location is the vacuole membrane. In terms of biological role, acts as a suppressor component of the dual wtf meiotic drive system, and can suppress but not confer meiotic drive by compatible poisons. Wtf meiotic drive systems promote unequal transmission of alleles from the parental zygote to progeny spores by encoding a poison and an antidote from the same locus; the poison is trans-acting and forms toxic aggregates in all spores within an ascus, wherease the antidote is spore-specific and targets aggregates for degradation by the vacuole. Meiotic drive by wtf systems therefore lead to poisoning of all progeny that do not inherit the dual poison/antidote allele, or express a compatible antidote. This Schizosaccharomyces kambucha (Fission yeast) protein is Meiotic drive suppressor wtf2.